We begin with the raw amino-acid sequence, 56 residues long: Large ribosomal subunit protein bL32 (56 aa).

Residues 1-16 (MAVQKSKKSRSMRGMR) show a composition bias toward basic residues. The interval 1–21 (MAVQKSKKSRSMRGMRRSHDA) is disordered.

Belongs to the bacterial ribosomal protein bL32 family.

This is Large ribosomal subunit protein bL32 from Vibrio atlanticus (strain LGP32) (Vibrio splendidus (strain Mel32)).